The following is a 37-amino-acid chain: GLFSILRGAAKFASKGLGKDLTKLGVDLVACKISKQC.

Residues C31 and C37 are joined by a disulfide bond.

As to expression, expressed by the skin glands.

It is found in the secreted. Antibacterial activity against Gram-positive bacterium S.aureus and Gram-negative bacterium E.coli. Has activity against C.albicans. This is Esculentin-2B from Lithobates berlandieri (Rio Grande leopard frog).